Reading from the N-terminus, the 492-residue chain is Bifunctional purine biosynthesis protein PurH (492 aa).

Positions 1–144 constitute an MGS-like domain; it reads MKKAILSVSN…KNFKHVITVV (144 aa).

Belongs to the PurH family.

The enzyme catalyses (6R)-10-formyltetrahydrofolate + 5-amino-1-(5-phospho-beta-D-ribosyl)imidazole-4-carboxamide = 5-formamido-1-(5-phospho-D-ribosyl)imidazole-4-carboxamide + (6S)-5,6,7,8-tetrahydrofolate. It carries out the reaction IMP + H2O = 5-formamido-1-(5-phospho-D-ribosyl)imidazole-4-carboxamide. The protein operates within purine metabolism; IMP biosynthesis via de novo pathway; 5-formamido-1-(5-phospho-D-ribosyl)imidazole-4-carboxamide from 5-amino-1-(5-phospho-D-ribosyl)imidazole-4-carboxamide (10-formyl THF route): step 1/1. Its pathway is purine metabolism; IMP biosynthesis via de novo pathway; IMP from 5-formamido-1-(5-phospho-D-ribosyl)imidazole-4-carboxamide: step 1/1. The sequence is that of Bifunctional purine biosynthesis protein PurH from Staphylococcus saprophyticus subsp. saprophyticus (strain ATCC 15305 / DSM 20229 / NCIMB 8711 / NCTC 7292 / S-41).